The primary structure comprises 351 residues: D-alanine--D-alanine ligase (351 aa).

In terms of domain architecture, ATP-grasp spans 135-343 (NQIFLQSGQK…MEEVFSDLIE (209 aa)). Residue 167-222 (LETLGFPQFLKPVEGGSSVSVYKITNREQLKEKLALIFESDSKVMSQSFLTGIEVS) coordinates ATP. Mg(2+) is bound by residues aspartate 298, glutamate 310, and asparagine 312.

The protein belongs to the D-alanine--D-alanine ligase family. The cofactor is Mg(2+). Requires Mn(2+) as cofactor.

The protein localises to the cytoplasm. It catalyses the reaction 2 D-alanine + ATP = D-alanyl-D-alanine + ADP + phosphate + H(+). It functions in the pathway cell wall biogenesis; peptidoglycan biosynthesis. Functionally, cell wall formation. The sequence is that of D-alanine--D-alanine ligase from Leptospira interrogans serogroup Icterohaemorrhagiae serovar Lai (strain 56601).